Consider the following 327-residue polypeptide: Lipoyl synthase (327 aa).

[4Fe-4S] cluster contacts are provided by C74, C79, C85, C100, C104, C107, and S314. The Radical SAM core domain maps to 86 to 303 (FSGGTATFMI…AEEGERMGFK (218 aa)).

This sequence belongs to the radical SAM superfamily. Lipoyl synthase family. The cofactor is [4Fe-4S] cluster.

Its subcellular location is the cytoplasm. The enzyme catalyses [[Fe-S] cluster scaffold protein carrying a second [4Fe-4S](2+) cluster] + N(6)-octanoyl-L-lysyl-[protein] + 2 oxidized [2Fe-2S]-[ferredoxin] + 2 S-adenosyl-L-methionine + 4 H(+) = [[Fe-S] cluster scaffold protein] + N(6)-[(R)-dihydrolipoyl]-L-lysyl-[protein] + 4 Fe(3+) + 2 hydrogen sulfide + 2 5'-deoxyadenosine + 2 L-methionine + 2 reduced [2Fe-2S]-[ferredoxin]. Its pathway is protein modification; protein lipoylation via endogenous pathway; protein N(6)-(lipoyl)lysine from octanoyl-[acyl-carrier-protein]: step 2/2. Functionally, catalyzes the radical-mediated insertion of two sulfur atoms into the C-6 and C-8 positions of the octanoyl moiety bound to the lipoyl domains of lipoate-dependent enzymes, thereby converting the octanoylated domains into lipoylated derivatives. The polypeptide is Lipoyl synthase (Pseudomonas paraeruginosa (strain DSM 24068 / PA7) (Pseudomonas aeruginosa (strain PA7))).